We begin with the raw amino-acid sequence, 232 residues long: Cytidylate kinase (232 aa).

An ATP-binding site is contributed by 10–18 (GPAASGKST).

The protein belongs to the cytidylate kinase family. Type 1 subfamily.

Its subcellular location is the cytoplasm. It catalyses the reaction CMP + ATP = CDP + ADP. It carries out the reaction dCMP + ATP = dCDP + ADP. The chain is Cytidylate kinase from Phytoplasma mali (strain AT).